The sequence spans 488 residues: Peptidoglycan endopeptidase LytF (488 aa).

The N-terminal stretch at 1–26 (MKKKLAAGLTASAIVGTTLVVTPAEA) is a signal peptide. LysM domains follow at residues 27–70 (ATIK…TLTI) and 92–135 (SVYT…KLKV). 3 disordered regions span residues 70–93 (IPGSKSSTSSSTSSSTTKKSGSSV), 137–176 (GTVSSSSSSSKKSNSNKSSSSSSKSSSNKSSSSSSSTGTY), and 218–239 (KSSGSDTSSKDNSSKSNQTSAT). 2 stretches are compositionally biased toward low complexity: residues 72–93 (GSKSSTSSSTSSSTTKKSGSSV) and 140–172 (SSSSSSSKKSNSNKSSSSSSKSSSNKSSSSSSS). Residues 174 to 217 (GTYKVQLGDSLWKIANKVNMSIAELKVLNNLKSDTIYVNQVLKT) form the LysM 3 domain. Residues 240–283 (TKYTVKSGDSLWKIANNYNLTVQQIRNINNLKSDVLYVGQVLKL) enclose the LysM 4 domain. Residues 286–306 (KASSGSSSSSSSSSNASSGTT) are disordered. The LysM 5 domain maps to 307–350 (TTYTVKSGDSLWVIAQKFNVTAQQIREKNNLKTDVLQVGQKLVI). Residues 370 to 488 (SAKINTMISA…QRYLGAKRYF (119 aa)) form the NlpC/P60 domain. Cys400 serves as the catalytic Nucleophile. His449 serves as the catalytic Proton acceptor. Residue Asn461 is part of the active site.

Belongs to the peptidase C40 family.

It is found in the secreted. The protein resides in the cell wall. Is inhibited in vitro by para-hydroxymercuribenzoate, a sulfydryl inhibitor. Functionally, cell wall hydrolase that cleaves gamma-D-glutamate-meso-diaminopimelate bonds in peptidoglycan. LytF is necessary and sufficient for vegetative daughter cell separation, and also seems to play a role in cell autolysis. The polypeptide is Peptidoglycan endopeptidase LytF (lytF) (Bacillus subtilis (strain 168)).